The chain runs to 74 residues: Pelophylaxin-2 (74 aa).

The N-terminal stretch at 1-22 (MFTMKKSLLFFFFLGTIALSLC) is a signal peptide. Residues 23–42 (EEERGADEEENGAEITDEEV) constitute a propeptide that is removed on maturation. Cysteines 68 and 74 form a disulfide.

Expressed by the skin glands.

The protein resides in the secreted. Antimicrobial peptide. This Pelophylax fukienensis (Fukien gold-striped pond frog) protein is Pelophylaxin-2.